A 179-amino-acid chain; its full sequence is MSRIGKRPIEIPSGVKVEFSDSVLTIEGPKGKLSRQVMDGVSLEITPSSIEVKRADDGLKARSAHGLTRTLVNNMVVGVTKGFERALEINGVGYRAEAKGDVLNLSLGYSHPINYALPAGIIVEVDKMTKLVVKGIDKELVGQTAAKIRSFRGPEPYKGKGIKYADEKILRKAGKTGKK.

The protein belongs to the universal ribosomal protein uL6 family. In terms of assembly, part of the 50S ribosomal subunit.

This protein binds to the 23S rRNA, and is important in its secondary structure. It is located near the subunit interface in the base of the L7/L12 stalk, and near the tRNA binding site of the peptidyltransferase center. This chain is Large ribosomal subunit protein uL6, found in Geobacter sulfurreducens (strain ATCC 51573 / DSM 12127 / PCA).